The following is a 412-amino-acid chain: Aspartate kinase Ask_LysC (412 aa).

One can recognise an ACT domain in the interval 265-332; sequence LTIRGVPDTP…QGIAAEMGAR (68 aa).

This sequence belongs to the aspartokinase family.

It localises to the cytoplasm. The enzyme catalyses L-aspartate + ATP = 4-phospho-L-aspartate + ADP. Its pathway is amino-acid biosynthesis; L-lysine biosynthesis via DAP pathway; (S)-tetrahydrodipicolinate from L-aspartate: step 1/4. It functions in the pathway amino-acid biosynthesis; L-methionine biosynthesis via de novo pathway; L-homoserine from L-aspartate: step 1/3. The protein operates within amino-acid biosynthesis; L-threonine biosynthesis; L-threonine from L-aspartate: step 1/5. Its activity is regulated as follows. Allosterically and strongly feedback inhibited by tryptophan. Addition of lysine alone slightly enhances activity. The simultaneous addition of lysine and tryptophan leads to very strong feedback inhibition of the enzyme. The feedback control by tryptophan is reduced in the presence of the compatible solutes hydroxyectoine or ectoine. Its function is as follows. Involved in the biosynthesis of L-aspartate-beta-semialdehyde which is a central intermediate in the biosynthesis of different amino acids (L-lysine, L-methionine, L-threonine). Catalyzes the phosphorylation of the beta-carboxyl group of L-aspartate to yield 4-phospho-L-aspartate. This Stutzerimonas stutzeri (strain A1501) (Pseudomonas stutzeri) protein is Aspartate kinase Ask_LysC (lysC).